A 132-amino-acid chain; its full sequence is uncharacterized protein (132 aa).

A disordered region spans residues 39-93 (HPAGASEALGALPPPRQLVEKRRVSPPRRLDQSGRDGGAVAKCSLSRGLSPPGWT). A compositionally biased stretch (basic and acidic residues) spans 56–72 (LVEKRRVSPPRRLDQSG).

This is an uncharacterized protein from Homo sapiens (Human).